The primary structure comprises 303 residues: Glutathione transport system permease protein GsiD (303 aa).

7 helical membrane-spanning segments follow: residues 37–57 (QHVA…AIFA), 105–125 (LAAG…LGLL), 144–164 (LFAF…GSGI), 165–185 (ANVI…LVRG), 208–228 (TILF…FFTM), 230–250 (IGTS…AQPP), and 266–286 (VIAP…VLAF). One can recognise an ABC transmembrane type-1 domain in the interval 101 to 290 (AQISLAAGVF…LTVLAFNLLG (190 aa)).

It belongs to the binding-protein-dependent transport system permease family. In terms of assembly, the complex is composed of two ATP-binding proteins (GsiA), two transmembrane proteins (GsiC and GsiD) and a solute-binding protein (GsiB).

It is found in the cell inner membrane. Part of the ABC transporter complex GsiABCD involved in glutathione import. Probably responsible for the translocation of the substrate across the membrane. The polypeptide is Glutathione transport system permease protein GsiD (Salmonella paratyphi A (strain ATCC 9150 / SARB42)).